The sequence spans 643 residues: tRNA 5-methylaminomethyl-2-thiouridine biosynthesis bifunctional protein MnmC (643 aa).

Positions 1–223 (MPDRLVSATL…VDDRLVGDYA (223 aa)) are tRNA (mnm(5)s(2)U34)-methyltransferase. An FAD-dependent cmnm(5)s(2)U34 oxidoreductase region spans residues 247–643 (IGAGLAGCAV…LRARRVGSAG (397 aa)).

This sequence in the N-terminal section; belongs to the methyltransferase superfamily. tRNA (mnm(5)s(2)U34)-methyltransferase family. The protein in the C-terminal section; belongs to the DAO family. The cofactor is FAD.

The protein resides in the cytoplasm. The enzyme catalyses 5-aminomethyl-2-thiouridine(34) in tRNA + S-adenosyl-L-methionine = 5-methylaminomethyl-2-thiouridine(34) in tRNA + S-adenosyl-L-homocysteine + H(+). Catalyzes the last two steps in the biosynthesis of 5-methylaminomethyl-2-thiouridine (mnm(5)s(2)U) at the wobble position (U34) in tRNA. Catalyzes the FAD-dependent demodification of cmnm(5)s(2)U34 to nm(5)s(2)U34, followed by the transfer of a methyl group from S-adenosyl-L-methionine to nm(5)s(2)U34, to form mnm(5)s(2)U34. This chain is tRNA 5-methylaminomethyl-2-thiouridine biosynthesis bifunctional protein MnmC, found in Burkholderia orbicola (strain MC0-3).